A 166-amino-acid polypeptide reads, in one-letter code: Twist-related protein (166 aa).

Low complexity predominate over residues Met-1 to Asn-18. A disordered region spans residues Met-1–Gln-83. The segment covering Ser-28–Arg-39 has biased composition (basic residues). The span at Ala-57–Val-75 shows a compositional bias: polar residues. The bHLH domain occupies Ser-72–Leu-123.

In terms of assembly, efficient DNA binding requires dimerization with another bHLH protein. Homodimer. As to expression, subset of mesodermal cells.

The protein localises to the nucleus. Probable transcription factor, which may be involved, with other proteins, in establishing the pattern of cell type-specific gene expression in mesodermal cell subgroups. This Xenopus laevis (African clawed frog) protein is Twist-related protein (twist1).